A 656-amino-acid polypeptide reads, in one-letter code: Chromosomal replication initiator protein DnaA (656 aa).

The segment at methionine 1–proline 100 is domain I, interacts with DnaA modulators. The disordered stretch occupies residues threonine 91–proline 313. Residues glycine 97–arginine 109 show a composition bias toward pro residues. The domain II stretch occupies residues glutamine 101–alanine 315. Composition is skewed to basic and acidic residues over residues glycine 126–alanine 144 and glutamine 231–proline 273. Low complexity predominate over residues glycine 291–proline 313. Positions arginine 316–alanine 532 are domain III, AAA+ region. Positions 360, 362, 363, and 364 each coordinate ATP. Residues serine 533 to glycine 656 are domain IV, binds dsDNA.

It belongs to the DnaA family. In terms of assembly, oligomerizes as a right-handed, spiral filament on DNA at oriC.

It is found in the cytoplasm. Functionally, plays an essential role in the initiation and regulation of chromosomal replication. ATP-DnaA binds to the origin of replication (oriC) to initiate formation of the DNA replication initiation complex once per cell cycle. Binds the DnaA box (a 9 base pair repeat at the origin) and separates the double-stranded (ds)DNA. Forms a right-handed helical filament on oriC DNA; dsDNA binds to the exterior of the filament while single-stranded (ss)DNA is stabiized in the filament's interior. The ATP-DnaA-oriC complex binds and stabilizes one strand of the AT-rich DNA unwinding element (DUE), permitting loading of DNA polymerase. After initiation quickly degrades to an ADP-DnaA complex that is not apt for DNA replication. Binds acidic phospholipids. The sequence is that of Chromosomal replication initiator protein DnaA from Streptomyces coelicolor (strain ATCC BAA-471 / A3(2) / M145).